We begin with the raw amino-acid sequence, 390 residues long: Homeobox protein Meis1 (390 aa).

The region spanning 108–192 (GGDVCSSESF…IDLVIDDREG (85 aa)) is the MEIS N-terminal domain. The span at 190 to 202 (REGGSKSDSEDVT) shows a compositional bias: basic and acidic residues. A disordered region spans residues 190–279 (REGGSKSDSE…KKRHKKRGIF (90 aa)). Positions 203–213 (RSANLTDQPSW) are enriched in polar residues. Positions 272–334 (RHKKRGIFPK…NARRRIVQPM (63 aa)) form a DNA-binding region, homeobox; TALE-type. The interval 299 to 329 (YPSEEQKKQLAQDTGLTILQVNNWFINARRR) is interaction with DNA. The segment at 335-390 (IDQSNRAVSQGTPYNPDGQPMGGFVMDGQQHMGIRAPGPMSGMGMNMGMEGQWHYM) is required for transcriptional activation.

The protein belongs to the TALE/MEIS homeobox family. In terms of assembly, interacts with the N-terminal region of PBX1 to form a heterodimer which binds DNA including a cAMP-responsive sequence in CYP17. Also forms heterodimers with PBX2. Forms heterotrimers with PBX1 or PBX2 and a number of HOX proteins including HOXA9, HOXD4 and HOXD9 where it acts as a non-DNA-binding partner. Also forms heterotrimers with PBX1 and HOX proteins including HOXD9 and HOXD10 where PBX1 is the non-DNA-binding partner. Heterodimer with DLX3. Heterodimer with HOXB13. As to expression, expressed at high levels in the lung with lower levels detected in the heart and brain. Expressed in pancreatic islets (beta-cells and non-beta-cells).

The protein resides in the nucleus. Its function is as follows. Acts as a transcriptional regulator of PAX6. Also acts as a transcriptional activator of PF4 in complex with PBX1 or PBX2. Required for hematopoiesis, megakaryocyte lineage development and vascular patterning. May function as a cofactor for HOXA7 and HOXA9 in the induction of myeloid leukemias. This Mus musculus (Mouse) protein is Homeobox protein Meis1 (Meis1).